The following is a 175-amino-acid chain: Pituitary adenylate cyclase-activating polypeptide (175 aa).

Positions 1–24 (MTMCSGARLALLVYGIIMHSSVSC) are cleaved as a signal peptide. Positions 25-78 (SPAAGLSFPGIRPEDEAYDQDGNPLQDFYDWDPPGVGSPASALRDAYALYYPAD) are excised as a propeptide. An important for receptor binding region spans residues 149–157 (VKKYLAAVL). Position 157 is a leucine amide (Leu-157). Residue Lys-168 is modified to Lysine amide. Positions 172 to 175 (IAYL) are excised as a propeptide.

The protein belongs to the glucagon family.

Its subcellular location is the secreted. Its function is as follows. PACAP is a neuropeptide involved in diverse array of physiological processes through activating the PACAP subfamily of class B1 G protein-coupled receptors: VIP receptor 1 (VIPR1), VIP receptor 2 (VIPR2), and PACAP type I receptor (ADCYAP1R1). Exerts neuroprotective and general cytoprotective effects due to anti-apoptotic, anti-inflammatory, and antioxidant actions. Promotes neuron projection development through the RAPGEF2/Rap1/B-Raf/ERK pathway. In chromaffin cells, induces long-lasting increase of intracellular calcium concentrations and neuroendocrine secretion. Involved in the control of glucose homeostasis, induces insulin secretion by pancreatic beta cells. PACAP exists in two bioactive forms from proteolysis of the same precursor protein, PACAP27 and PACAP38, which differ by eleven amino acid residues in the C-terminus. In Mus musculus (Mouse), this protein is Pituitary adenylate cyclase-activating polypeptide.